The following is a 247-amino-acid chain: tRNA uridine(34) hydroxylase (247 aa).

The 95-residue stretch at Thr-124 to Asn-218 folds into the Rhodanese domain. Cys-178 (cysteine persulfide intermediate) is an active-site residue.

Belongs to the TrhO family.

The catalysed reaction is uridine(34) in tRNA + AH2 + O2 = 5-hydroxyuridine(34) in tRNA + A + H2O. Its function is as follows. Catalyzes oxygen-dependent 5-hydroxyuridine (ho5U) modification at position 34 in tRNAs. This Rickettsia africae (strain ESF-5) protein is tRNA uridine(34) hydroxylase.